We begin with the raw amino-acid sequence, 101 residues long: Urease subunit beta (101 aa).

It belongs to the urease beta subunit family. In terms of assembly, heterotrimer of UreA (gamma), UreB (beta) and UreC (alpha) subunits. Three heterotrimers associate to form the active enzyme.

The protein localises to the cytoplasm. The enzyme catalyses urea + 2 H2O + H(+) = hydrogencarbonate + 2 NH4(+). It participates in nitrogen metabolism; urea degradation; CO(2) and NH(3) from urea (urease route): step 1/1. This is Urease subunit beta from Hahella chejuensis (strain KCTC 2396).